The following is a 403-amino-acid chain: 26S proteasome regulatory subunit 8 (403 aa).

Residue 186-193 coordinates ATP; it reads GPPGTGKT.

This sequence belongs to the AAA ATPase family.

The protein resides in the cytoplasm. Its subcellular location is the nucleus. Its function is as follows. The 26S proteasome is involved in the ATP-dependent degradation of ubiquitinated proteins. The regulatory (or ATPase) complex confers ATP dependency and substrate specificity to the 26S complex. The protein is 26S proteasome regulatory subunit 8 (psmC5) of Dictyostelium discoideum (Social amoeba).